The primary structure comprises 258 residues: Phosphate import ATP-binding protein PstB (258 aa).

The 243-residue stretch at 5–247 (IDVSGLNAYY…ERIFSNPSVQ (243 aa)) folds into the ABC transporter domain. 37–44 (GPSGCGKS) provides a ligand contact to ATP.

Belongs to the ABC transporter superfamily. Phosphate importer (TC 3.A.1.7) family. In terms of assembly, the complex is composed of two ATP-binding proteins (PstB), two transmembrane proteins (PstC and PstA) and a solute-binding protein (PstS).

It localises to the cell membrane. It carries out the reaction phosphate(out) + ATP + H2O = ADP + 2 phosphate(in) + H(+). Its function is as follows. Part of the ABC transporter complex PstSACB involved in phosphate import. Responsible for energy coupling to the transport system. This chain is Phosphate import ATP-binding protein PstB, found in Streptomyces coelicolor (strain ATCC BAA-471 / A3(2) / M145).